Consider the following 388-residue polypeptide: Mannitol-1-phosphate 5-dehydrogenase (388 aa).

Residue 5-16 (AVHFGGGNIGRG) participates in NAD(+) binding. The active site involves Lys-213.

It belongs to the mannitol dehydrogenase family. In terms of assembly, monomer.

The catalysed reaction is D-mannitol 1-phosphate + NAD(+) = beta-D-fructose 6-phosphate + NADH + H(+). Functionally, catalyzes the NAD(H)-dependent interconversion of D-fructose 6-phosphate and D-mannitol 1-phosphate in the mannitol metabolic pathway. The protein is Mannitol-1-phosphate 5-dehydrogenase of Penicillium rubens (strain ATCC 28089 / DSM 1075 / NRRL 1951 / Wisconsin 54-1255) (Penicillium chrysogenum).